We begin with the raw amino-acid sequence, 106 residues long: A-type ATP synthase subunit F (106 aa).

It belongs to the V-ATPase F subunit family. In terms of assembly, has multiple subunits with at least A(3), B(3), C, D, E, F, H, I and proteolipid K(x).

Its subcellular location is the cell membrane. Component of the A-type ATP synthase that produces ATP from ADP in the presence of a proton gradient across the membrane. The polypeptide is A-type ATP synthase subunit F (Methanosphaera stadtmanae (strain ATCC 43021 / DSM 3091 / JCM 11832 / MCB-3)).